The following is a 295-amino-acid chain: (R)-3-hydroxydecanoyl-ACP:CoA transacylase (295 aa).

Residues 28 to 254 (NTIILINGSL…VIRDAGHFLD (227 aa)) form the AB hydrolase-1 domain.

Its pathway is polyester biosynthesis; polyhydroxyalkanoate biosynthesis. Catalyzes the transfer of the acyl moiety from in vitro synthesized 3-hydroxydecanoyl-CoA to acyl carrier protein. The sequence is that of (R)-3-hydroxydecanoyl-ACP:CoA transacylase (phaG) from Ectopseudomonas oleovorans (Pseudomonas oleovorans).